The sequence spans 202 residues: MDLTIVGSDNTLPVSDVVFGREFSEALVHQIVVAYRNTARSGTKAQKSRSQVSGTTKKSKKQKGGGARHGALTAPIFVGGGVAFAAKPRSFSQKVNRKQYRSAICSIFSELNRQGRLKVVDAFDVEVSKTKVFAEKIKSLEVVGSRLLIVSDGISECLSLSSRNLPCVDVRSVQALDPVALVGSDVVVLTVGAVKKIEEWLV.

The span at 42-52 (GTKAQKSRSQV) shows a compositional bias: polar residues. The tract at residues 42–70 (GTKAQKSRSQVSGTTKKSKKQKGGGARHG) is disordered.

This sequence belongs to the universal ribosomal protein uL4 family. In terms of assembly, part of the 50S ribosomal subunit.

Its function is as follows. One of the primary rRNA binding proteins, this protein initially binds near the 5'-end of the 23S rRNA. It is important during the early stages of 50S assembly. It makes multiple contacts with different domains of the 23S rRNA in the assembled 50S subunit and ribosome. Forms part of the polypeptide exit tunnel. In Xylella fastidiosa (strain 9a5c), this protein is Large ribosomal subunit protein uL4.